Reading from the N-terminus, the 387-residue chain is Sedoheptulose-1,7-bisphosphatase, chloroplastic (387 aa).

A disulfide bond links C109 and C114. Positions 120, 149, 170, 172, and 173 each coordinate Mg(2+). Substrate contacts are provided by residues 173–176 (DGSS), Y284, and K314. E320 lines the Mg(2+) pocket.

It belongs to the FBPase class 1 family. In terms of assembly, homodimer. It depends on Mg(2+) as a cofactor.

Its subcellular location is the plastid. It is found in the chloroplast. The enzyme catalyses D-sedoheptulose 1,7-bisphosphate + H2O = D-sedoheptulose 7-phosphate + phosphate. It participates in carbohydrate biosynthesis; Calvin cycle. In Spinacia oleracea (Spinach), this protein is Sedoheptulose-1,7-bisphosphatase, chloroplastic.